The chain runs to 126 residues: Large ribosomal subunit protein bL19 (126 aa).

This sequence belongs to the bacterial ribosomal protein bL19 family.

Functionally, this protein is located at the 30S-50S ribosomal subunit interface and may play a role in the structure and function of the aminoacyl-tRNA binding site. In Bordetella bronchiseptica (strain ATCC BAA-588 / NCTC 13252 / RB50) (Alcaligenes bronchisepticus), this protein is Large ribosomal subunit protein bL19.